We begin with the raw amino-acid sequence, 143 residues long: MAKKIIGFIKLQVPAGKANPSPPIGPALGQRGLNIMEFCKAFNAQTQGVEPGMPIPVVITAFADKSFTFVMKTPPATYLIKKAASITKGSAKANTDKVGKITRAQAEEIATTKRPDLTAADMDAAVRTIAGSARSMGITVEGL.

The protein belongs to the universal ribosomal protein uL11 family. As to quaternary structure, part of the ribosomal stalk of the 50S ribosomal subunit. Interacts with L10 and the large rRNA to form the base of the stalk. L10 forms an elongated spine to which L12 dimers bind in a sequential fashion forming a multimeric L10(L12)X complex. In terms of processing, one or more lysine residues are methylated.

Functionally, forms part of the ribosomal stalk which helps the ribosome interact with GTP-bound translation factors. The polypeptide is Large ribosomal subunit protein uL11 (Herminiimonas arsenicoxydans).